A 744-amino-acid polypeptide reads, in one-letter code: Cytosolic neutral trehalase (744 aa).

The Ca(2+) site is built by Asp-99, Asp-101, Asn-103, Gln-105, and Asp-110. Residues Arg-286, 293–294 (WD), Asn-330, 339–341 (RSQ), Glu-406, Arg-455, and Gly-458 contribute to the substrate site. Active-site proton donor/acceptor residues include Asp-460 and Glu-665.

It belongs to the glycosyl hydrolase 37 family. The cofactor is Ca(2+).

The protein resides in the cytoplasm. It carries out the reaction alpha,alpha-trehalose + H2O = alpha-D-glucose + beta-D-glucose. It functions in the pathway carbohydrate degradation. In terms of biological role, hydrolyzes intracellular trehalose to glucose. The protein is Cytosolic neutral trehalase of Neurospora crassa (strain ATCC 24698 / 74-OR23-1A / CBS 708.71 / DSM 1257 / FGSC 987).